The sequence spans 1493 residues: Son of sevenless homolog (1493 aa).

The region spanning 244 to 448 is the DH domain; that stretch reads TYESVAVDFL…ERVVGCVSDM (205 aa). Positions 496–606 constitute a PH domain; the sequence is ELEKDGDLGM…WMAVLVKVTT (111 aa). One can recognise an N-terminal Ras-GEF domain in the interval 656-824; that stretch reads GIPVIKCGTV…TILALIEKRV (169 aa). Residues 897–1164 enclose the Ras-GEF domain; sequence HPIEIGRQLT…YNKSLEIQPK (268 aa). Disordered regions lie at residues 1067-1091, 1165-1248, and 1263-1493; these read KSPP…DPEN, GLDT…DDAP, and HPKI…SSNK. Residues 1079–1088 are compositionally biased toward basic and acidic residues; sequence QQKDDLKASD. Polar residues-rich tracts occupy residues 1208–1231 and 1279–1289; these read HSQN…NTPL and SRANQSNSVSL. The span at 1308 to 1326 shows a compositional bias: low complexity; sequence STATSPTTLTTTTTPSSAG. Residues 1350–1361 show a composition bias toward polar residues; sequence LTPSRDNSSPSA. Residues 1381–1400 show a composition bias toward low complexity; the sequence is STSSDVSSSPSTSGSTSSAT. The segment covering 1402-1417 has biased composition (basic and acidic residues); sequence ENQEQLRVIFDREESH. Over residues 1426–1435 the composition is skewed to pro residues; it reads PLPPALPPPR. Positions 1453 to 1464 are enriched in polar residues; it reads HNSNSPTLSSEQ.

Interacts with cmd-1 in the presence of Ca(2+).

Promotes the exchange of Ras-bound GDP by GTP. May regulate signaling pathways downstream of receptor tyrosine kinase, egl-15 and let-23. Required for larval and male spicule development, fluid homeostasis, vulva induction, spermatogenesis, and oogenesis by promoting meiosis prophase exit during oocyte maturation. Required for the delamination of G1 cell by promoting the loss of cell junctions and detachment from the excretory system during larval development. Plays a role in nicotinic acetylcholine receptor (nAChR)-mediated sensitivity to nicotine. Regulates synaptic levels of nAchR subunit lev-1 in the nerve cord. The chain is Son of sevenless homolog from Caenorhabditis elegans.